The following is a 280-amino-acid chain: MNNSKIISKVLLSLSLFTVGASAFVIQDELMQKNHAKAEVSAEEIKKHEEKWNKYYGVNAFNLPKELFSKVDEKDRQKYPYNTIGNVFVKGQTSATGVLIGKNTVLTNRHIAKFANGDPSKVSFRPSINTDDNGNTETPYGEYEVKEILQEPFGAGVDLALIRLKPDQNGVSLGDKISPAKIGTSNDLKDGDKLELIGYPFDHKVNQMHRSEIELTTLSRGLRYYGFTVPGNSGSGIFNSNGELVGIHSSKVSHLDREHQINYGVGIGNYVKRIINEKNE.

The signal sequence occupies residues 1–38; that stretch reads MNNSKIISKVLLSLSLFTVGASAFVIQDELMQKNHAKA. Active-site charge relay system residues include histidine 110, aspartate 158, and serine 233.

Belongs to the peptidase S1B family. The cofactor is Ca(2+).

Has serine protease-like properties and binds to the skin protein profilaggrin. Cleaves substrates after acidic residues. Exfoliative toxins cause impetigous diseases commonly referred as staphylococcal scalded skin syndrome (SSSS). The sequence is that of Exfoliative toxin A (eta) from Staphylococcus aureus.